Here is a 154-residue protein sequence, read N- to C-terminus: Myoglobin (154 aa).

Residues 2–148 (GLSEAEWQLV…FRKDIAAKYK (147 aa)) form the Globin domain. S4 is subject to Phosphoserine. Residue H65 coordinates nitrite. H65 serves as a coordination point for O2. T68 is subject to Phosphothreonine. H94 contacts heme b.

This sequence belongs to the globin family. As to quaternary structure, monomeric.

It localises to the cytoplasm. Its subcellular location is the sarcoplasm. It carries out the reaction Fe(III)-heme b-[protein] + nitric oxide + H2O = Fe(II)-heme b-[protein] + nitrite + 2 H(+). The enzyme catalyses H2O2 + AH2 = A + 2 H2O. Functionally, monomeric heme protein which primary function is to store oxygen and facilitate its diffusion within muscle tissues. Reversibly binds oxygen through a pentacoordinated heme iron and enables its timely and efficient release as needed during periods of heightened demand. Depending on the oxidative conditions of tissues and cells, and in addition to its ability to bind oxygen, it also has a nitrite reductase activity whereby it regulates the production of bioactive nitric oxide. Under stress conditions, like hypoxia and anoxia, it also protects cells against reactive oxygen species thanks to its pseudoperoxidase activity. The chain is Myoglobin (MB) from Mesoplodon carlhubbsi (Hubb's beaked whale).